Here is a 466-residue protein sequence, read N- to C-terminus: Asparagine--tRNA ligase (466 aa).

Belongs to the class-II aminoacyl-tRNA synthetase family. In terms of assembly, homodimer.

It localises to the cytoplasm. The enzyme catalyses tRNA(Asn) + L-asparagine + ATP = L-asparaginyl-tRNA(Asn) + AMP + diphosphate + H(+). The sequence is that of Asparagine--tRNA ligase from Yersinia pseudotuberculosis serotype O:1b (strain IP 31758).